Consider the following 156-residue polypeptide: MASRVLSAYVSRLPAAFAPLPRVRMLAVARPLSTALCSAGTQTRLGTLQPALVLAQVPGRVTQLCRQYSDMPPLTLEGIQDRVLYVLKLYDKIDPEKLSVNSHFMKDLGLDSLDQVEIIMAMEDEFGFEIPDIDAEKLMCPQEIVDYIADKKDVYE.

Residues 1–68 constitute a mitochondrion transit peptide; that stretch reads MASRVLSAYV…GRVTQLCRQY (68 aa). The Carrier domain maps to 77–152; sequence EGIQDRVLYV…EIVDYIADKK (76 aa). An N6-acetyllysine modification is found at Lys-88. Ser-112 carries the O-(pantetheine 4'-phosphoryl)serine modification.

It belongs to the acyl carrier protein (ACP) family. Mammalian complex I is composed of 45 different subunits. Interacts with ETFRF1. Identified in a complex composed of MALSU1, MIEF1 upstream open reading frame protein and NDUFAB1; within the trimeric complex, MIEF1 upstream open reading frame protein functions as a bridging scaffold that interacts with MALSU1 on one side, and with NDUFAB1 on the other side. The complex interacts with the mitochondrial large ribosomal subunit. Interacts with alpha-1-microglobulin chain; this interaction is required for the maintenance of mitochondrial redox homeostasis. Component of the mitochondrial core iron-sulfur cluster (ISC) complex composed of NFS1, LYRM4, NDUFAB1, ISCU, FXN, and FDX2; this complex is a heterohexamer containing two copies of each monomer. Component of the cyteine desulfurase complex composed of NFS1, LYRM4 and NDUFAB1; this complex contributes to the stability and cysteine desulfurase activity of NFS1. In terms of processing, phosphopantetheinylation at Ser-112 is essential for interactions with LYR motif-containing proteins.

The protein resides in the mitochondrion. In terms of biological role, carrier of the growing fatty acid chain in fatty acid biosynthesis. Accessory and non-catalytic subunit of the mitochondrial membrane respiratory chain NADH dehydrogenase (Complex I), which functions in the transfer of electrons from NADH to the respiratory chain. Accessory protein, of the core iron-sulfur cluster (ISC) assembly complex, that regulates, in association with LYRM4, the stability and the cysteine desulfurase activity of NFS1 and participates in the [2Fe-2S] clusters assembly on the scaffolding protein ISCU. The core iron-sulfur cluster (ISC) assembly complex is involved in the de novo synthesis of a [2Fe-2S] cluster, the first step of the mitochondrial iron-sulfur protein biogenesis. This process is initiated by the cysteine desulfurase complex (NFS1:LYRM4:NDUFAB1) that produces persulfide which is delivered on the scaffold protein ISCU in a FXN-dependent manner. Then this complex is stabilized by FDX2 which provides reducing equivalents to accomplish the [2Fe-2S] cluster assembly. Finally, the [2Fe-2S] cluster is transferred from ISCU to chaperone proteins, including HSCB, HSPA9 and GLRX5. In Gorilla gorilla gorilla (Western lowland gorilla), this protein is Acyl carrier protein, mitochondrial.